A 228-amino-acid chain; its full sequence is Cytochrome c oxidase subunit 2 (228 aa).

The Mitochondrial intermembrane portion of the chain corresponds to 1–26 (MATWANLGLQDSSSPLMEQLNFFHDH). The helical transmembrane segment at 27 to 48 (TLLILTMITILVGYIMGMLSFN) threads the bilayer. Residues 49-62 (KFTNRFLLHGQTIE) are Mitochondrial matrix-facing. A helical membrane pass occupies residues 63–82 (IIWTVLPAIILMFIAFPSLR). The Mitochondrial intermembrane portion of the chain corresponds to 83-228 (LLYLMDEINT…FIKWITSMTN (146 aa)). Positions 161, 196, 198, 200, 204, and 207 each coordinate Cu cation. Glutamate 198 is a binding site for Mg(2+).

The protein belongs to the cytochrome c oxidase subunit 2 family. As to quaternary structure, component of the cytochrome c oxidase (complex IV, CIV), a multisubunit enzyme composed of a catalytic core of 3 subunits and several supernumerary subunits. The complex exists as a monomer or a dimer and forms supercomplexes (SCs) in the inner mitochondrial membrane with ubiquinol-cytochrome c oxidoreductase (cytochrome b-c1 complex, complex III, CIII). It depends on Cu cation as a cofactor.

The protein resides in the mitochondrion inner membrane. It catalyses the reaction 4 Fe(II)-[cytochrome c] + O2 + 8 H(+)(in) = 4 Fe(III)-[cytochrome c] + 2 H2O + 4 H(+)(out). In terms of biological role, component of the cytochrome c oxidase, the last enzyme in the mitochondrial electron transport chain which drives oxidative phosphorylation. The respiratory chain contains 3 multisubunit complexes succinate dehydrogenase (complex II, CII), ubiquinol-cytochrome c oxidoreductase (cytochrome b-c1 complex, complex III, CIII) and cytochrome c oxidase (complex IV, CIV), that cooperate to transfer electrons derived from NADH and succinate to molecular oxygen, creating an electrochemical gradient over the inner membrane that drives transmembrane transport and the ATP synthase. Cytochrome c oxidase is the component of the respiratory chain that catalyzes the reduction of oxygen to water. Electrons originating from reduced cytochrome c in the intermembrane space (IMS) are transferred via the dinuclear copper A center (CU(A)) of subunit 2 and heme A of subunit 1 to the active site in subunit 1, a binuclear center (BNC) formed by heme A3 and copper B (CU(B)). The BNC reduces molecular oxygen to 2 water molecules using 4 electrons from cytochrome c in the IMS and 4 protons from the mitochondrial matrix. The sequence is that of Cytochrome c oxidase subunit 2 (COII) from Anopheles gambiae (African malaria mosquito).